Here is a 119-residue protein sequence, read N- to C-terminus: Holo-[acyl-carrier-protein] synthase (119 aa).

D8 and E58 together coordinate Mg(2+).

It belongs to the P-Pant transferase superfamily. AcpS family. Mg(2+) serves as cofactor.

It localises to the cytoplasm. It catalyses the reaction apo-[ACP] + CoA = holo-[ACP] + adenosine 3',5'-bisphosphate + H(+). Transfers the 4'-phosphopantetheine moiety from coenzyme A to a Ser of acyl-carrier-protein. The protein is Holo-[acyl-carrier-protein] synthase of Streptococcus suis (strain 05ZYH33).